The primary structure comprises 223 residues: Charged multivesicular body protein 3 (223 aa).

The N-myristoyl glycine moiety is linked to residue Gly2. Residues 2-113 (GLFGKTQEKP…LQKSTEVMKA (112 aa)) are intramolecular interaction with C-terminus. Residues 22-54 (KIRKEMRVVDRQIRDIQREEEKVKRSVKDAAKK) adopt a coiled-coil conformation. 2 important for autoinhibitory function regions span residues 59-64 (VCVVLA) and 168-169 (IL). The stretch at 149 to 223 (ESMDDQEEME…MQSRLATLRS (75 aa)) forms a coiled coil. An intramolecular interaction with N-terminus region spans residues 151 to 221 (MDDQEEMEEA…EAMQSRLATL (71 aa)). An interaction with VPS4A region spans residues 151-223 (MDDQEEMEEA…MQSRLATLRS (73 aa)). Lys179 participates in a covalent cross-link: Glycyl lysine isopeptide (Lys-Gly) (interchain with G-Cter in ubiquitin). Residues 180–223 (APSKVTDALPEPEPAGAMAASEGDEEDDEEDLEAMQSRLATLRS) are disordered. 3 interaction with STAMBP regions span residues 196-223 (AMAASEGDEEDDEEDLEAMQSRLATLRS), 204-208 (EEDDE), and 222-223 (RS). The residue at position 200 (Ser200) is a Phosphoserine. The MIT-interacting motif motif lies at 201–212 (EGDEEDDEEDLE). Over residues 201-212 (EGDEEDDEEDLE) the composition is skewed to acidic residues.

It belongs to the SNF7 family. As to quaternary structure, probable core component of the endosomal sorting required for transport complex III (ESCRT-III). ESCRT-III components are thought to multimerize to form a flat lattice on the perimeter membrane of the endosome. Several assembly forms of ESCRT-III may exist that interact and act sequentially. Forms a metastable monomer in solution; its core structure (without part of the putative autoinhibitory C-terminal acidic region) oligomerizes into a flat lattice via two different dimerization interfaces. In vitro, heteromerizes with CHMP2A (but not CHMP4) to form helical tubular structures that expose membrane-interacting sites on the outside whereas VPS4B can associate on the inside of the tubule. May interact with IGFBP7; the relevance of such interaction however remains unclear. Interacts with CHMP2A. Interacts with CHMP4A; the interaction requires the release of CHMP4A autoinhibition. Interacts with VPS4A. Interacts with STAMBP; the interaction appears to relieve the autoinhibition of CHMP3. Interacts with VTA1.

The protein localises to the cytoplasm. It is found in the cytosol. The protein resides in the membrane. It localises to the endosome. Its subcellular location is the late endosome membrane. Its function is as follows. Probable core component of the endosomal sorting required for transport complex III (ESCRT-III) which is involved in multivesicular bodies (MVBs) formation and sorting of endosomal cargo proteins into MVBs. MVBs contain intraluminal vesicles (ILVs) that are generated by invagination and scission from the limiting membrane of the endosome and mostly are delivered to lysosomes enabling degradation of membrane proteins, such as stimulated growth factor receptors, lysosomal enzymes and lipids. The MVB pathway appears to require the sequential function of ESCRT-O, -I,-II and -III complexes. ESCRT-III proteins mostly dissociate from the invaginating membrane before the ILV is released. The ESCRT machinery also functions in topologically equivalent membrane fission events, such as the terminal stages of cytokinesis. ESCRT-III proteins are believed to mediate the necessary vesicle extrusion and/or membrane fission activities, possibly in conjunction with the AAA ATPase VPS4. Selectively binds to phosphatidylinositol 3,5-bisphosphate PtdIns(3,5)P2 and PtdIns(3,4)P2 in preference to other phosphoinositides tested. Involved in late stages of cytokinesis. Plays a role in endosomal sorting/trafficking of EGF receptor. This Rattus norvegicus (Rat) protein is Charged multivesicular body protein 3 (Chmp3).